The following is a 243-amino-acid chain: Type III pantothenate kinase (243 aa).

Position 7–14 (7–14) interacts with ATP; that stretch reads DIGNTRLK. Substrate contacts are provided by residues Y95 and 102-105; that span reads GIDR. D104 functions as the Proton acceptor in the catalytic mechanism. T126 contacts ATP. Residue T177 participates in substrate binding.

Belongs to the type III pantothenate kinase family. As to quaternary structure, homodimer. The cofactor is NH4(+). K(+) serves as cofactor.

Its subcellular location is the cytoplasm. The catalysed reaction is (R)-pantothenate + ATP = (R)-4'-phosphopantothenate + ADP + H(+). It functions in the pathway cofactor biosynthesis; coenzyme A biosynthesis; CoA from (R)-pantothenate: step 1/5. Catalyzes the phosphorylation of pantothenate (Pan), the first step in CoA biosynthesis. The sequence is that of Type III pantothenate kinase from Acinetobacter baylyi (strain ATCC 33305 / BD413 / ADP1).